A 131-amino-acid chain; its full sequence is Global transcriptional regulator Spx (131 aa).

Cys10 and Cys13 are joined by a disulfide.

It belongs to the ArsC family. Spx subfamily. In terms of assembly, interacts with the C-terminal domain of the alpha subunit of the RNAP.

Its subcellular location is the cytoplasm. Its function is as follows. Global transcriptional regulator that plays a key role in stress response and exerts either positive or negative regulation of genes. Acts by interacting with the C-terminal domain of the alpha subunit of the RNA polymerase (RNAP). This interaction can enhance binding of RNAP to the promoter region of target genes and stimulate their transcription, or block interaction of RNAP with activator. This is Global transcriptional regulator Spx from Staphylococcus saprophyticus subsp. saprophyticus (strain ATCC 15305 / DSM 20229 / NCIMB 8711 / NCTC 7292 / S-41).